The chain runs to 158 residues: Ribonucleases P/MRP protein subunit POP6 (158 aa).

A coiled-coil region spans residues 51–71 (KNDNIKKSVNKLDKQINMADR).

Component of nuclear RNase P and RNase MRP complexes. RNase P consists of an RNA moiety and at least 9 protein subunits including POP1, POP3, POP4, POP5, POP6, POP7, POP8, RPP1 and RPR2. RNase MRP complex consists of an RNA moiety and at least 10 protein subunits including POP1, POP3, POP4, POP5, POP6, POP7, POP8, RMP1, RPP1 and SNM1, many of which are shared with the RNase P complex.

The protein localises to the nucleus. The enzyme catalyses Endonucleolytic cleavage of RNA, removing 5'-extranucleotides from tRNA precursor.. In terms of biological role, component of ribonuclease P, a protein complex that generates mature tRNA molecules by cleaving their 5'-ends. Also a component of RNase MRP, which cleaves pre-rRNA sequences. The chain is Ribonucleases P/MRP protein subunit POP6 (POP6) from Saccharomyces cerevisiae (strain ATCC 204508 / S288c) (Baker's yeast).